A 448-amino-acid polypeptide reads, in one-letter code: Phosphoglucosamine mutase (448 aa).

The active-site Phosphoserine intermediate is the serine 100. Residues serine 100, aspartate 240, aspartate 242, and aspartate 244 each coordinate Mg(2+). A Phosphoserine modification is found at serine 100.

This sequence belongs to the phosphohexose mutase family. It depends on Mg(2+) as a cofactor. Activated by phosphorylation.

The catalysed reaction is alpha-D-glucosamine 1-phosphate = D-glucosamine 6-phosphate. In terms of biological role, catalyzes the conversion of glucosamine-6-phosphate to glucosamine-1-phosphate. This chain is Phosphoglucosamine mutase, found in Bacillus cereus (strain ATCC 10987 / NRS 248).